The primary structure comprises 384 residues: PqqA peptide cyclase (384 aa).

The Radical SAM core domain occupies 5–220 (VGLPLWLLAE…TNEYREKLKA (216 aa)). [4Fe-4S] cluster is bound by residues Cys19, Cys23, and Cys26.

The protein belongs to the radical SAM superfamily. PqqE family. In terms of assembly, interacts with PqqD. The interaction is necessary for activity of PqqE. The cofactor is [4Fe-4S] cluster.

It carries out the reaction [PQQ precursor protein] + S-adenosyl-L-methionine = E-Y cross-linked-[PQQ precursor protein] + 5'-deoxyadenosine + L-methionine + H(+). The protein operates within cofactor biosynthesis; pyrroloquinoline quinone biosynthesis. In terms of biological role, catalyzes the cross-linking of a glutamate residue and a tyrosine residue in the PqqA protein as part of the biosynthesis of pyrroloquinoline quinone (PQQ). The protein is PqqA peptide cyclase of Acinetobacter baumannii (strain SDF).